The chain runs to 225 residues: MLTTTFALLTAALGVSAHYTLPRVGTGSDWQHVRRADNWQNNGFVGDVNSEQIRCFQATPAGAQDVYTVQAGSTVTYHANPSIYHPGPMQFYLARVPDGQDVKSWTGEGAVWFKVYEEQPQFGAQLTWPSNGKSSFEVPIPSCIRAGNYLLRAEHIALHVAQSQGGAQFYISCAQLQVTGGGSTEPSQKVSFPGAYKSTDPGILININYPVPTSYQNPGPAVFRC.

The first 17 residues, 1-17 (MLTTTFALLTAALGVSA), serve as a signal peptide directing secretion. Cu(2+)-binding residues include His-18 and His-85. 2 disulfides stabilise this stretch: Cys-55–Cys-173 and Cys-143–Cys-225. His-159 and Gln-168 together coordinate O2. A Cu(2+)-binding site is contributed by Tyr-170.

This sequence belongs to the polysaccharide monooxygenase AA9 family. The cofactor is Cu(2+).

The protein resides in the secreted. The catalysed reaction is [(1-&gt;4)-beta-D-glucosyl]n+m + reduced acceptor + O2 = 4-dehydro-beta-D-glucosyl-[(1-&gt;4)-beta-D-glucosyl]n-1 + [(1-&gt;4)-beta-D-glucosyl]m + acceptor + H2O.. With respect to regulation, is able to utilize various natural phenolic compounds as reducing agents. Most of these reducing agents are present in plants, either free or as lignin building blocks, such as sinapic acid, or as flavonoids such as catechin and dopamine. Phenolic compounds with 1,2-benzenediol and 1,2,3-benzenetriol moieties yield the highest release of oxidized and non-oxidized glucooligosaccharides from cellulose compared to monophenols or sulfur-containing compounds. Its function is as follows. Lytic polysaccharide monooxygenase (LPMO) that depolymerizes crystalline and amorphous polysaccharides via the oxidation of scissile alpha- or beta-(1-4)-glycosidic bonds, yielding C1 or C4 oxidation products. Catalysis by LPMOs requires the reduction of the active-site copper from Cu(II) to Cu(I) by a reducing agent and H(2)O(2) or O(2) as a cosubstrate. Shows oxidative cleavage of xylan in addition to cellulose. Shows a strong synergistic effect with endoglucanase I (EGI) with a 16-fold higher release of detected oligosaccharides. In Thermothelomyces thermophilus (strain ATCC 42464 / BCRC 31852 / DSM 1799) (Sporotrichum thermophile), this protein is AA9 family lytic polysaccharide monooxygenase A.